The following is a 355-amino-acid chain: Phenylalanine--tRNA ligase alpha subunit (355 aa).

E273 provides a ligand contact to Mg(2+).

This sequence belongs to the class-II aminoacyl-tRNA synthetase family. Phe-tRNA synthetase alpha subunit type 1 subfamily. Tetramer of two alpha and two beta subunits. The cofactor is Mg(2+).

It is found in the cytoplasm. The enzyme catalyses tRNA(Phe) + L-phenylalanine + ATP = L-phenylalanyl-tRNA(Phe) + AMP + diphosphate + H(+). This chain is Phenylalanine--tRNA ligase alpha subunit, found in Bifidobacterium longum subsp. infantis (strain ATCC 15697 / DSM 20088 / JCM 1222 / NCTC 11817 / S12).